A 134-amino-acid chain; its full sequence is Holo-[acyl-carrier-protein] synthase (134 aa).

Mg(2+) is bound by residues Asp-8 and Glu-57.

The protein belongs to the P-Pant transferase superfamily. AcpS family. It depends on Mg(2+) as a cofactor.

It is found in the cytoplasm. It carries out the reaction apo-[ACP] + CoA = holo-[ACP] + adenosine 3',5'-bisphosphate + H(+). Functionally, transfers the 4'-phosphopantetheine moiety from coenzyme A to a Ser of acyl-carrier-protein. The sequence is that of Holo-[acyl-carrier-protein] synthase from Rhizobium etli (strain CIAT 652).